An 800-amino-acid polypeptide reads, in one-letter code: Nuclear cap-binding protein subunit 1 (800 aa).

Positions 1 to 26 (MSRRRAHDTEDEGYDHRRNKRRRVSE) are disordered. Thr-9 is modified (phosphothreonine). In terms of domain architecture, MIF4G spans 31 to 243 (EDRLESLILR…CLWAQIRKLR (213 aa)). The interval 669–704 (LSKADSSSSESDEDAPTKRKKPITHADKPSEEAVER) is disordered. Basic and acidic residues predominate over residues 692–704 (THADKPSEEAVER).

This sequence belongs to the NCBP1 family. Component of the nuclear cap-binding complex (CBC), a heterodimer composed of Cbp80 and Cbp20 that interacts with m7GpppG-capped RNA.

It is found in the nucleus. Functionally, component of the cap-binding complex (CBC), which binds cotranscriptionally to the 5'-cap of pre-mRNAs and is involved in various processes such as pre-mRNA splicing and RNA-mediated gene silencing (RNAi). The CBC complex is involved in miRNA-mediated RNA interference via its interaction with Ars2 and is required for primary microRNAs (miRNAs) processing. Also involved in innate immunity via the short interfering RNAs (siRNAs) processing machinery by restricting the viral RNA production. In the CBC complex, Cbp80 does not bind directly capped RNAs (m7GpppG-capped RNA) but is required to stabilize the movement of the N-terminal loop of Cbp20 and lock the CBC into a high affinity cap-binding state with the cap structure. This is Nuclear cap-binding protein subunit 1 (Cbp80) from Drosophila persimilis (Fruit fly).